Consider the following 98-residue polypeptide: Spermatogenesis-associated protein 45 (98 aa).

The protein belongs to the SPATA45 family.

The chain is Spermatogenesis-associated protein 45 (SPATA45) from Homo sapiens (Human).